The sequence spans 243 residues: Probable phosphatase CLI_3563 (243 aa).

His8, His10, His16, His41, Glu74, His102, His132, Asp192, and His194 together coordinate Zn(2+).

This sequence belongs to the PHP family. Zn(2+) serves as cofactor.

The chain is Probable phosphatase CLI_3563 from Clostridium botulinum (strain Langeland / NCTC 10281 / Type F).